Reading from the N-terminus, the 875-residue chain is Alanine--tRNA ligase (875 aa).

4 residues coordinate Zn(2+): histidine 567, histidine 571, cysteine 669, and histidine 673.

Belongs to the class-II aminoacyl-tRNA synthetase family. The cofactor is Zn(2+).

The protein resides in the cytoplasm. The enzyme catalyses tRNA(Ala) + L-alanine + ATP = L-alanyl-tRNA(Ala) + AMP + diphosphate. Its function is as follows. Catalyzes the attachment of alanine to tRNA(Ala) in a two-step reaction: alanine is first activated by ATP to form Ala-AMP and then transferred to the acceptor end of tRNA(Ala). Also edits incorrectly charged Ser-tRNA(Ala) and Gly-tRNA(Ala) via its editing domain. In Geobacter sulfurreducens (strain ATCC 51573 / DSM 12127 / PCA), this protein is Alanine--tRNA ligase.